Consider the following 1034-residue polypeptide: Glycine dehydrogenase (decarboxylating) B, mitochondrial (1034 aa).

The N-terminal 63 residues, 1-63 (MERARRLAIL…LNGFGSQVRT (63 aa)), are a transit peptide targeting the mitochondrion. Lysine 770 carries the N6-(pyridoxal phosphate)lysine modification.

It belongs to the GcvP family. Homodimer. The glycine cleavage system is composed of four proteins: P, T, L and H. Pyridoxal 5'-phosphate serves as cofactor.

Its subcellular location is the mitochondrion. The enzyme catalyses N(6)-[(R)-lipoyl]-L-lysyl-[glycine-cleavage complex H protein] + glycine + H(+) = N(6)-[(R)-S(8)-aminomethyldihydrolipoyl]-L-lysyl-[glycine-cleavage complex H protein] + CO2. Its function is as follows. The glycine cleavage system catalyzes the degradation of glycine. The P protein binds the alpha-amino group of glycine through its pyridoxal phosphate cofactor; CO(2) is released and the remaining methylamine moiety is then transferred to the lipoamide cofactor of the H protein. This Flaveria pringlei protein is Glycine dehydrogenase (decarboxylating) B, mitochondrial (GDCSPB).